Reading from the N-terminus, the 468-residue chain is 6-phospho-beta-galactosidase (468 aa).

5 residues coordinate D-galactose 6-phosphate: Gln19, His116, Asn159, Glu160, and Asn297. Glu160 acts as the Proton donor in catalysis. The Nucleophile role is filled by Glu375. D-galactose 6-phosphate-binding residues include Ser428, Trp429, Lys435, and Tyr437.

This sequence belongs to the glycosyl hydrolase 1 family.

It carries out the reaction a 6-phospho-beta-D-galactoside + H2O = D-galactose 6-phosphate + an alcohol. It functions in the pathway carbohydrate metabolism; lactose degradation; D-galactose 6-phosphate and beta-D-glucose from lactose 6-phosphate: step 1/1. In Streptococcus pneumoniae (strain JJA), this protein is 6-phospho-beta-galactosidase.